Reading from the N-terminus, the 84-residue chain is Small ribosomal subunit protein uS17c (84 aa).

It belongs to the universal ribosomal protein uS17 family. In terms of assembly, part of the 30S ribosomal subunit.

The protein resides in the plastid. It localises to the chloroplast. Functionally, one of the primary rRNA binding proteins, it binds specifically to the 5'-end of 16S ribosomal RNA. The protein is Small ribosomal subunit protein uS17c (rps17) of Thalassiosira pseudonana (Marine diatom).